The primary structure comprises 67 residues: Small ribosomal subunit protein eS17 (67 aa).

Belongs to the eukaryotic ribosomal protein eS17 family.

The polypeptide is Small ribosomal subunit protein eS17 (Thermococcus gammatolerans (strain DSM 15229 / JCM 11827 / EJ3)).